The primary structure comprises 201 residues: MKLQVQDTKKDLEVSDQTFGREFNEDLVHQAVVAYMAGGRAGTKAQKGRSDVSGGGAKPWKQKGSGRARAGTIRSPIWRTGGKVFAARPRDYSQKLNRKMYRAAMRSIFSELVRQERLVVVDSFAVDAPKTKGLLEKLGGLGVSNALIVTDQADANLYLSARNLPGVDVSEVGGLDPVSLVGFEKVLITVPALKQVEEWLA.

The interval 43 to 69 (TKAQKGRSDVSGGGAKPWKQKGSGRAR) is disordered.

This sequence belongs to the universal ribosomal protein uL4 family. As to quaternary structure, part of the 50S ribosomal subunit.

Functionally, one of the primary rRNA binding proteins, this protein initially binds near the 5'-end of the 23S rRNA. It is important during the early stages of 50S assembly. It makes multiple contacts with different domains of the 23S rRNA in the assembled 50S subunit and ribosome. In terms of biological role, forms part of the polypeptide exit tunnel. The chain is Large ribosomal subunit protein uL4 from Thioalkalivibrio sulfidiphilus (strain HL-EbGR7).